Here is a 244-residue protein sequence, read N- to C-terminus: Transcriptional regulatory protein AruR (244 aa).

The Response regulatory domain occupies Arg-6–Ile-124. A 4-aspartylphosphate modification is found at Asp-60. Residues Gln-139 to Ala-239 constitute a DNA-binding region (ompR/PhoB-type).

Phosphorylated by AruS.

The protein resides in the cytoplasm. Its pathway is amino-acid degradation; L-arginine degradation [regulation]. Functionally, member of the two-component regulatory system AruS/AruR, which is involved in the regulation of the arginine transaminase (ATA) pathway in response to exogeneous L-arginine. Regulates transcription of aruH and aruI. In Pseudomonas aeruginosa (strain ATCC 15692 / DSM 22644 / CIP 104116 / JCM 14847 / LMG 12228 / 1C / PRS 101 / PAO1), this protein is Transcriptional regulatory protein AruR (aruR).